A 464-amino-acid chain; its full sequence is ATP synthase subunit beta (464 aa).

Residue 153 to 160 coordinates ATP; that stretch reads GGAGVGKT.

This sequence belongs to the ATPase alpha/beta chains family. F-type ATPases have 2 components, CF(1) - the catalytic core - and CF(0) - the membrane proton channel. CF(1) has five subunits: alpha(3), beta(3), gamma(1), delta(1), epsilon(1). CF(0) has three main subunits: a(1), b(2) and c(9-12). The alpha and beta chains form an alternating ring which encloses part of the gamma chain. CF(1) is attached to CF(0) by a central stalk formed by the gamma and epsilon chains, while a peripheral stalk is formed by the delta and b chains.

It localises to the cell inner membrane. The catalysed reaction is ATP + H2O + 4 H(+)(in) = ADP + phosphate + 5 H(+)(out). Produces ATP from ADP in the presence of a proton gradient across the membrane. The catalytic sites are hosted primarily by the beta subunits. The chain is ATP synthase subunit beta from Burkholderia vietnamiensis (strain G4 / LMG 22486) (Burkholderia cepacia (strain R1808)).